Reading from the N-terminus, the 154-residue chain is Aspartate carbamoyltransferase regulatory chain (154 aa).

The Zn(2+) site is built by cysteine 109, cysteine 114, cysteine 138, and cysteine 141.

It belongs to the PyrI family. Contains catalytic and regulatory chains. Zn(2+) serves as cofactor.

In terms of biological role, involved in allosteric regulation of aspartate carbamoyltransferase. The chain is Aspartate carbamoyltransferase regulatory chain from Aeromonas hydrophila subsp. hydrophila (strain ATCC 7966 / DSM 30187 / BCRC 13018 / CCUG 14551 / JCM 1027 / KCTC 2358 / NCIMB 9240 / NCTC 8049).